The primary structure comprises 922 residues: Eukaryotic translation initiation factor 3 subunit C (922 aa).

Disordered regions lie at residues 1–37 and 154–308; these read MSRF…QPII and APIA…KVKG. A compositionally biased stretch (low complexity) spans 8 to 21; sequence GSDSESESSLSGDE. A compositionally biased stretch (acidic residues) spans 165–189; that stretch reads ESADEDQEKDEDSEASSSSDDDSDE. A compositionally biased stretch (basic and acidic residues) spans 207 to 216; it reads SRSKFLKKEE. Residues 217-243 show a composition bias toward acidic residues; sequence AEDEESSSDDEDWGSDSDESDSDESDD. Basic and acidic residues predominate over residues 258–275; it reads TVNEGDRQAAEKKKEEKA. A compositionally biased stretch (acidic residues) spans 289–301; the sequence is EGEEEEDDNEGGG. The region spanning 674 to 850 is the PCI domain; it reads FHMHINLELL…QTVVMHGTEP (177 aa). The disordered stretch occupies residues 885-922; sequence YFNRGDRGDRDQKDQYQRKEGGYMRRGYRRDQQGQSNY. The segment covering 888-907 has biased composition (basic and acidic residues); the sequence is RGDRGDRDQKDQYQRKEGGY.

The protein belongs to the eIF-3 subunit C family. As to quaternary structure, component of the eukaryotic translation initiation factor 3 (eIF-3) complex, which is composed of 13 subunits: eif3a, eif3b, eif3c, eif3d, eif3e, eif3f, eif3g, eif3h, eif3i, eif3j, eif3k, eif3l and eif3m.

The protein localises to the cytoplasm. Its function is as follows. Component of the eukaryotic translation initiation factor 3 (eIF-3) complex, which is involved in protein synthesis of a specialized repertoire of mRNAs and, together with other initiation factors, stimulates binding of mRNA and methionyl-tRNAi to the 40S ribosome. The eIF-3 complex specifically targets and initiates translation of a subset of mRNAs involved in cell proliferation. The polypeptide is Eukaryotic translation initiation factor 3 subunit C (eif3c) (Xenopus tropicalis (Western clawed frog)).